The sequence spans 126 residues: C-type natriuretic peptide (126 aa).

An N-terminal signal peptide occupies residues 1–23 (MHLSQLLACALLLSLLSLRPSEA). The disordered stretch occupies residues 20–71 (PSEAKPGAPPKVPRTPPGEEVAEPQAAGGGQKKGDKTPGGGGANLKDDRSRL). A propeptide spanning residues 24-73 (KPGAPPKVPRTPPGEEVAEPQAAGGGQKKGDKTPGGGGANLKDDRSRLLR) is cleaved from the precursor. The segment covering 26–35 (GAPPKVPRTP) has biased composition (pro residues). A compositionally biased stretch (gly residues) spans 46-62 (AGGGQKKGDKTPGGGGA). Cysteines 110 and 126 form a disulfide.

This sequence belongs to the natriuretic peptide family. Post-translationally, degraded by IDE (in vitro).

Its subcellular location is the secreted. Functionally, hormone which plays a role in endochondral ossification through regulation of cartilaginous growth plate chondrocytes proliferation and differentiation. May also be vasoactive and natriuretic. Acts by specifically binding and stimulating NPR2 to produce cGMP. Binds the clearance receptor NPR3. In Ovis aries (Sheep), this protein is C-type natriuretic peptide (NPPC).